Reading from the N-terminus, the 438-residue chain is UDP-N-acetylmuramoylalanine--D-glutamate ligase (438 aa).

Residue 112–118 (GSNGKST) coordinates ATP.

The protein belongs to the MurCDEF family.

Its subcellular location is the cytoplasm. It catalyses the reaction UDP-N-acetyl-alpha-D-muramoyl-L-alanine + D-glutamate + ATP = UDP-N-acetyl-alpha-D-muramoyl-L-alanyl-D-glutamate + ADP + phosphate + H(+). It functions in the pathway cell wall biogenesis; peptidoglycan biosynthesis. In terms of biological role, cell wall formation. Catalyzes the addition of glutamate to the nucleotide precursor UDP-N-acetylmuramoyl-L-alanine (UMA). The sequence is that of UDP-N-acetylmuramoylalanine--D-glutamate ligase from Salmonella typhi.